We begin with the raw amino-acid sequence, 123 residues long: Cyclic ether formation enzyme xenC (123 aa).

Residues 1 to 24 (MSSLLLSDVLSYGIFGFSALCVQA) form the signal peptide. Helical transmembrane passes span 58–78 (SALR…LWSP) and 102–122 (LGES…AILV).

It belongs to the cyclic ether formation enzyme xenC family.

It localises to the membrane. It functions in the pathway mycotoxin biosynthesis. Its function is as follows. Cyclic ether formation enzyme; part of the gene cluster that mediates the biosynthesis of xenoacremones such as xenoacremone A, a compound that shows inhibitory activity toward the PI3K/AKT signaling pathway and which has the ability to induce apoptosis of A549 lung cancer cells. Within the pathway, cooperation of the hybrid PKS-NRPS xenE and the trans-acting enoyl reductase xenG is responsible for the formation of the reduced tyrosine-nonaketide derivative. The alpha/beta hydrolase xenA then accelerates intramolecular nucleophilic attack to give a pyrrolidone derivative. Subsequently, three enzymes, xenF, xenD, and xenC, coordinately participate in the conversion to xenoacremone B. XenF catalyzes sigmatropic rearrangement to form an A-ring, which leads to an unusual intermediate with a hexane ring, which is required for the formation of the tricarbocyclic product. Epoxidation catalyzed by xenD and the formation of the paracyclophane ether catalyzed by xenC initiate a spontaneous intramolecular Diels-Alder (IMDA) reaction to yield xenoacremone B. Spontaneous hydration of xenoacremone B leads to the formation of xenoacremone A, which undergoes subsequent methylation to afford xenoacremone C. The sequence is that of Cyclic ether formation enzyme xenC from Xenoacremonium sinensis (Endophyte fungus).